Reading from the N-terminus, the 521-residue chain is ATP synthase subunit beta (521 aa).

Low complexity-rich tracts occupy residues 1–21 (MAKA…AAKA) and 28–42 (PKTT…TKSG). The disordered stretch occupies residues 1–42 (MAKAATPKTTAAAEAKPAAKAPAKKAAPKTTAAAKPAATKSG). 199–206 (GGAGVGKT) provides a ligand contact to ATP.

Belongs to the ATPase alpha/beta chains family. F-type ATPases have 2 components, CF(1) - the catalytic core - and CF(0) - the membrane proton channel. CF(1) has five subunits: alpha(3), beta(3), gamma(1), delta(1), epsilon(1). CF(0) has three main subunits: a(1), b(2) and c(9-12). The alpha and beta chains form an alternating ring which encloses part of the gamma chain. CF(1) is attached to CF(0) by a central stalk formed by the gamma and epsilon chains, while a peripheral stalk is formed by the delta and b chains.

The protein localises to the cell inner membrane. The enzyme catalyses ATP + H2O + 4 H(+)(in) = ADP + phosphate + 5 H(+)(out). Produces ATP from ADP in the presence of a proton gradient across the membrane. The catalytic sites are hosted primarily by the beta subunits. The sequence is that of ATP synthase subunit beta from Brucella abortus (strain 2308).